The primary structure comprises 141 residues: Putative 8-oxo-dGTP diphosphatase 2 (141 aa).

Residues 2-131 enclose the Nudix hydrolase domain; it reads LNQIVVAGAI…WIADLARTLN (130 aa). Gly-37, Glu-52, Glu-55, and Glu-56 together coordinate Mg(2+). The Nudix box motif lies at 37–58; it reads GKVAAGETERAALARELAEELG.

It belongs to the Nudix hydrolase family. It depends on Mg(2+) as a cofactor. Mn(2+) serves as cofactor.

The enzyme catalyses 8-oxo-dGTP + H2O = 8-oxo-dGMP + diphosphate + H(+). Functionally, may be involved in the GO system responsible for removing an oxidatively damaged form of guanine (7,8-dihydro-8-oxoguanine, 8-oxo-dGTP) from DNA and the nucleotide pool. 8-oxo-dGTP is inserted opposite dA and dC residues of template DNA with almost equal efficiency thus leading to A.T to G.C transversions. MutT specifically degrades 8-oxo-dGTP to the monophosphate. This is Putative 8-oxo-dGTP diphosphatase 2 (mutT2) from Mycobacterium tuberculosis (strain CDC 1551 / Oshkosh).